The primary structure comprises 256 residues: Ribonuclease 3 (256 aa).

The 123-residue stretch at leucine 3–glycine 125 folds into the RNase III domain. Glutamate 38 is a binding site for Mg(2+). The active site involves aspartate 42. The Mg(2+) site is built by aspartate 111 and glutamate 114. Glutamate 114 is a catalytic residue. A DRBM domain is found at aspartate 152–lysine 222. Positions arginine 230–glutamate 256 are disordered.

It belongs to the ribonuclease III family. In terms of assembly, homodimer. Mg(2+) serves as cofactor.

Its subcellular location is the cytoplasm. The catalysed reaction is Endonucleolytic cleavage to 5'-phosphomonoester.. In terms of biological role, digests double-stranded RNA. Involved in the processing of primary rRNA transcript to yield the immediate precursors to the large and small rRNAs (23S and 16S). Processes some mRNAs, and tRNAs when they are encoded in the rRNA operon. Processes pre-crRNA and tracrRNA of type II CRISPR loci if present in the organism. The polypeptide is Ribonuclease 3 (Cupriavidus necator (strain ATCC 17699 / DSM 428 / KCTC 22496 / NCIMB 10442 / H16 / Stanier 337) (Ralstonia eutropha)).